We begin with the raw amino-acid sequence, 168 residues long: Disulfide bond formation protein B 2 (168 aa).

Topologically, residues 1–9 are cytoplasmic; sequence MLPARLRTF. A helical membrane pass occupies residues 10–26; the sequence is FLPACLVALAVLVASFR. Residues 27 to 44 are Periplasmic-facing; it reads LENTVGLMPCPLCLSQRL. A disulfide bridge links Cys-36 with Cys-39. Residues 45-61 form a helical membrane-spanning segment; sequence LLGGYALLCFAAVLQAP. Over 62 to 67 the chain is Cytoplasmic; it reads GTRGIL. Residues 68-85 form a helical membrane-spanning segment; the sequence is RYARLALGCSLAGALLAA. Residues 86–140 are Periplasmic-facing; that stretch reads RHVWLQGAEGVNEVCPVPIGRVFEQSWSEAARQLLLGGPDCRSLAWSFLDLTLPE. Cysteines 100 and 126 form a disulfide. A helical transmembrane segment spans residues 141 to 159; that stretch reads WSLLAFLLLAVLPLSCLLA. Topologically, residues 160 to 168 are cytoplasmic; sequence YRFRTLART.

Belongs to the DsbB family.

The protein localises to the cell inner membrane. Required for disulfide bond formation in some periplasmic proteins. Acts by oxidizing the DsbA protein. The protein is Disulfide bond formation protein B 2 (dsbB2) of Pseudomonas putida (strain ATCC 47054 / DSM 6125 / CFBP 8728 / NCIMB 11950 / KT2440).